Reading from the N-terminus, the 273-residue chain is Ribosomal RNA small subunit methyltransferase A (273 aa).

6 residues coordinate S-adenosyl-L-methionine: asparagine 18, leucine 20, glycine 45, glutamate 66, aspartate 91, and asparagine 113.

It belongs to the class I-like SAM-binding methyltransferase superfamily. rRNA adenine N(6)-methyltransferase family. RsmA subfamily.

It localises to the cytoplasm. The enzyme catalyses adenosine(1518)/adenosine(1519) in 16S rRNA + 4 S-adenosyl-L-methionine = N(6)-dimethyladenosine(1518)/N(6)-dimethyladenosine(1519) in 16S rRNA + 4 S-adenosyl-L-homocysteine + 4 H(+). Functionally, specifically dimethylates two adjacent adenosines (A1518 and A1519) in the loop of a conserved hairpin near the 3'-end of 16S rRNA in the 30S particle. May play a critical role in biogenesis of 30S subunits. The sequence is that of Ribosomal RNA small subunit methyltransferase A from Shigella boydii serotype 18 (strain CDC 3083-94 / BS512).